Consider the following 275-residue polypeptide: MDVWEWVVAAILGLVEGLTEYAPVSSTGHMIIVDDLWLKSSELVGSQNAYVFKIVIQLGSILAVALLFKDRLLQLAGFKKQAATQSEGRGLTLGKVAVGLLPAAVLGLLFEDKMESIFHVRTVAFALIAGAFLMIAADFINKRNNKKKQQVDDISYKQALAIGLFQCLALWPGFSRSGSTISGGVMLGLTHRAAANFTFIMAIPIMVGASALSLIKNWDALDISLLPFYATGFISAFLVSLVVVRFFLKLINKIKLVPFALYRIALGLLLLFLFS.

7 consecutive transmembrane segments (helical) span residues 48-68 (NAYV…ALLF), 90-110 (GLTL…GLLF), 117-137 (IFHV…MIAA), 154-174 (ISYK…WPGF), 195-215 (ANFT…LSLI), 223-243 (ISLL…SLVV), and 254-274 (IKLV…LFLF).

Belongs to the UppP family.

The protein resides in the cell membrane. The enzyme catalyses di-trans,octa-cis-undecaprenyl diphosphate + H2O = di-trans,octa-cis-undecaprenyl phosphate + phosphate + H(+). Functionally, catalyzes the dephosphorylation of undecaprenyl diphosphate (UPP). Confers resistance to bacitracin. The protein is Undecaprenyl-diphosphatase 2 of Shouchella clausii (strain KSM-K16) (Alkalihalobacillus clausii).